The primary structure comprises 972 residues: Optomotor-blind protein (972 aa).

6 disordered regions span residues 44–248, 263–286, 508–563, 645–676, 805–889, and 918–972; these read SLLT…YFPA, PGLY…HAHH, AKGF…HPHA, ADVE…TGSP, AVTP…PSEL, and EEAA…GTDQ. Composition is skewed to low complexity over residues 49–80 and 97–142; these read GSNN…NTNN and SNHS…NNTS. Residues 155–176 are compositionally biased toward pro residues; the sequence is PPSPAGTPPPTIVGLPPIPPPN. Composition is skewed to low complexity over residues 177-193 and 201-212; these read NNSS…AAAH and AHHSPSTGAAAP. Pro residues predominate over residues 213–225; sequence PAGPTGLPPPTPP. The span at 226–237 shows a compositional bias: low complexity; the sequence is HHLQQQQQQQQH. The segment covering 274-286 has biased composition (basic residues); the sequence is PPHHPGAHPHAHH. Residues 332–513 constitute a DNA-binding region (T-box); the sequence is LEGKDLWEKF…NNPFAKGFRD (182 aa). Residues 818–831 show a composition bias toward gly residues; the sequence is PPGGGGGGLGGGVV. Residues 835 to 851 are compositionally biased toward low complexity; it reads PRSLSSSPRPRPASHSP. The residue at position 887 (Ser887) is a Phosphoserine. Basic residues predominate over residues 952 to 963; sequence HPHHQTHLHSHH.

In third-instar larvae, expressed in the brain region that will develop into optic lobes and more weakly in the thoracic part of the ventral ganglion.

It localises to the nucleus. Functionally, essential protein that may function as a transcription regulator. Vital for pupal development. Required for proper development of the optic lobes and wings, and abdominal pigmentation. This Drosophila melanogaster (Fruit fly) protein is Optomotor-blind protein (bi).